Reading from the N-terminus, the 355-residue chain is UDP-3-O-acylglucosamine N-acyltransferase (355 aa).

Histidine 258 (proton acceptor) is an active-site residue.

It belongs to the transferase hexapeptide repeat family. LpxD subfamily. In terms of assembly, homotrimer.

The enzyme catalyses a UDP-3-O-[(3R)-3-hydroxyacyl]-alpha-D-glucosamine + a (3R)-hydroxyacyl-[ACP] = a UDP-2-N,3-O-bis[(3R)-3-hydroxyacyl]-alpha-D-glucosamine + holo-[ACP] + H(+). It functions in the pathway bacterial outer membrane biogenesis; LPS lipid A biosynthesis. In terms of biological role, catalyzes the N-acylation of UDP-3-O-acylglucosamine using 3-hydroxyacyl-ACP as the acyl donor. Is involved in the biosynthesis of lipid A, a phosphorylated glycolipid that anchors the lipopolysaccharide to the outer membrane of the cell. The protein is UDP-3-O-acylglucosamine N-acyltransferase of Bradyrhizobium sp. (strain ORS 278).